Here is a 125-residue protein sequence, read N- to C-terminus: Salivary protein 15 Ipac-1 (125 aa).

A signal peptide spans 1-15; sequence MKVVCIILLFGIAAA. Residues Asn82 and Asn94 are each glycosylated (N-linked (GlcNAc...) asparagine). Positions 106-125 are CD4-binding; it reads GPSGQTCADKSKCVGHIPGC.

Belongs to the salp15 family. As to quaternary structure, interacts with host CD4. Interacts with host DC-SIGN (CD209). Interacts with Borrelia outer surface protein C (OspC). As to expression, expressed in salivary glands.

It is found in the secreted. Functionally, salivary tick protein that downregulates host immune system by binding to both dendritic cells, and CD4(+) T cells. Specifically binds to the CD4 coreceptor on T cells. This interaction prevents the activation of the Src kinase, Lck, and its downstream substrate Zap-70, and results in deficient activation of PLCgamma1, the repression of calcium fluxes triggered by T-cell antigen receptor (TCR) ligation, and a subsequent reduction in interleukin-2 production. This salivary protein also binds to DC-SIGN (CD209) on dendritic cells (DC) and activates the Raf-1 kinase/MEK signaling pathway that results in down-regulating expression of pro-inflammatory cytokines. Furthermore, it inhibits T cell proliferation induced by DCs. It also inhibits in vitro keratinocyte inflammation induced by Borrelia burgdorferi or by the major outer surface protein (OspC) of Borrelia. In addition, it downregulates chemokines and monocyte chemoattractant protein 1, as well as several antimicrobial peptides such as defensins, cathelicidin, psoriasin, and RNase 7. Apart from its immunomodulatory activities, it is also associated with protection of Borrelia spirochetes from antibody-mediated killing through its binding to OspC. In vivo, tests on different immune disease animal models show promising therapeutic results, e.g., in inhibiting HIV infection, experimental autoimmune encephalomyelitis, transplantation rejection, and asthma. The polypeptide is Salivary protein 15 Ipac-1 (Ixodes pacificus (Western black-legged tick)).